The sequence spans 1132 residues: BTB/POZ domain-containing protein 7 (1132 aa).

The span at M1–H10 shows a compositional bias: polar residues. Residues M1–Q24 are disordered. G2 is lipidated: N-myristoyl glycine. 2 consecutive BTB domains span residues T142–D211 and Y247–V341. The BACK domain maps to Y413–I479. At S722 the chain carries Phosphoserine. Disordered stretches follow at residues L897 to R1019 and Q1035 to L1132. Over residues R918–H927 the composition is skewed to basic residues. 4 stretches are compositionally biased toward basic and acidic residues: residues T928–P939, K1000–R1019, P1083–D1093, and T1105–S1114. At S1012 the chain carries Phosphoserine.

It is found in the nucleus. Functionally, acts as a mediator of epithelial dynamics and organ branching by promoting cleft progression. Induced following accumulation of fibronectin in forming clefts, leading to local expression of the cell-scattering SNAIL2 and suppression of E-cadherin levels, thereby altering cell morphology and reducing cell-cell adhesion. This stimulates cell separation at the base of forming clefts by local, dynamic intercellular gap formation and promotes cleft progression. This chain is BTB/POZ domain-containing protein 7 (BTBD7), found in Homo sapiens (Human).